The sequence spans 240 residues: CD302 antigen (240 aa).

The C-type lectin domain maps to 40–160 (FQDSCYIFLQ…CEVSSVEGTL (121 aa)). N-linked (GlcNAc...) asparagine glycosylation occurs at Asn-117. A disulfide bond links Cys-136 and Cys-151. Residues 177-197 (ILISALVIASTVILTVLGAVI) traverse the membrane as a helical segment. Topologically, residues 198–240 (WFLYKRNLDSGFTTVFSTAPQSPFNDDCVLVVAEENEYAVQFD) are cytoplasmic.

It is found in the membrane. It localises to the cell projection. The protein localises to the filopodium. Its subcellular location is the cytoplasm. The protein resides in the cell cortex. Functionally, potential multifunctional C-type lectin receptor that may play roles in endocytosis and phagocytosis as well as in cell adhesion and migration. In Sus scrofa (Pig), this protein is CD302 antigen.